A 224-amino-acid polypeptide reads, in one-letter code: Myogenin (224 aa).

Phosphoserine; by CaMK2G is present on residues S77 and S79. In terms of domain architecture, bHLH spans 81–132; it reads DRRRAATLREKRRLKKVNEAFEALKRSTLLNPNQRLPKVEILRSAIQYIERL. At T87 the chain carries Phosphothreonine; by CaMK2G.

Homodimer and heterodimer with E12; heterodimerization enhances MYOG DNA-binding and transcriptional activities. Interacts with SMARCA4/BRG1/BAF190A. Interacts (via C-terminal region) with SSRP1 and SUPT16H; the interaction is indicative of an interaction with the FACT complex. Interacts with CSRP3. Post-translationally, phosphorylated by CAMK2G on threonine and serine amino acids in a muscle activity-dependent manner. Phosphorylation of Thr-87 impairs both DNA-binding and trans-activation functions in contracting muscles.

It localises to the nucleus. Acts as a transcriptional activator that promotes transcription of muscle-specific target genes and plays a role in muscle differentiation, cell cycle exit and muscle atrophy. Essential for the development of functional embryonic skeletal fiber muscle differentiation. However is dispensable for postnatal skeletal muscle growth; phosphorylation by CAMK2G inhibits its transcriptional activity in respons to muscle activity. Required for the recruitment of the FACT complex to muscle-specific promoter regions, thus promoting gene expression initiation. During terminal myoblast differentiation, plays a role as a strong activator of transcription at loci with an open chromatin structure previously initiated by MYOD1. Together with MYF5 and MYOD1, co-occupies muscle-specific gene promoter core regions during myogenesis. Also cooperates with myocyte-specific enhancer factor MEF2D and BRG1-dependent recruitment of SWI/SNF chromatin-remodeling enzymes to alter chromatin structure at myogenic late gene promoters. Facilitates cell cycle exit during terminal muscle differentiation through the up-regulation of miR-20a expression, which in turn represses genes involved in cell cycle progression. Binds to the E-box containing (E1) promoter region of the miR-20a gene. Also plays a role in preventing reversal of muscle cell differentiation. Contributes to the atrophy-related gene expression in adult denervated muscles. Induces fibroblasts to differentiate into myoblasts. This is Myogenin (MYOG) from Homo sapiens (Human).